Here is a 521-residue protein sequence, read N- to C-terminus: SET and MYND domain-containing protein DDB_G0292140 (521 aa).

The segment at 1–101 (MDGVIESPSN…KIKKSKKSIK (101 aa)) is disordered. Residues 12 to 55 (TIKISPSTSDSSTTTPIITTPPTQSTATVTTKAAATTTTTEAST) are compositionally biased toward low complexity. Pro residues predominate over residues 56-65 (TPPPPQPTPT). Positions 66 to 90 (PTQSTATVTKEVETTTETIPPIVTK) are enriched in low complexity. Positions 91-101 (GKIKKSKKSIK) are enriched in basic residues. An SET domain is found at 122 to 406 (WPIHVYSHPI…EGDELTISYI (285 aa)). Positions 167, 170, 188, 191, 197, 201, 209, and 213 each coordinate Zn(2+). The segment at 167–213 (CQHCFLEVPLNQQILPTDFYMCEGCQRVGYCSANCRCIDYSQHRFEC) adopts an MYND-type zinc-finger fold. The interval 442–521 (QTGTLEKDDD…QDHQNNDKSN (80 aa)) is disordered. Residues 448-469 (KDDDDNDDEKEKMDEDDDEKDD) are compositionally biased toward acidic residues. The segment covering 470–485 (DINNKNDKKSKYKSDG) has biased composition (basic and acidic residues). A compositionally biased stretch (acidic residues) spans 486–495 (STDDEEDEDN). Positions 497–514 (NNKNNNKNKNNNSNNQDH) are enriched in low complexity.

Belongs to the class V-like SAM-binding methyltransferase superfamily.

Its function is as follows. Probable methyltransferase. The polypeptide is SET and MYND domain-containing protein DDB_G0292140 (Dictyostelium discoideum (Social amoeba)).